Here is a 416-residue protein sequence, read N- to C-terminus: Dihydroorotase (416 aa).

Residues His-53 and His-55 each contribute to the Zn(2+) site. Substrate is bound by residues His-55–Arg-57 and Asn-87. Zn(2+) contacts are provided by Asp-145, His-172, His-225, and Asp-298. Residue Asp-298 is part of the active site. A substrate-binding site is contributed by His-302.

It belongs to the metallo-dependent hydrolases superfamily. DHOase family. Class I DHOase subfamily. Requires Zn(2+) as cofactor.

The catalysed reaction is (S)-dihydroorotate + H2O = N-carbamoyl-L-aspartate + H(+). The protein operates within pyrimidine metabolism; UMP biosynthesis via de novo pathway; (S)-dihydroorotate from bicarbonate: step 3/3. In terms of biological role, catalyzes the reversible cyclization of carbamoyl aspartate to dihydroorotate. The polypeptide is Dihydroorotase (Deinococcus radiodurans (strain ATCC 13939 / DSM 20539 / JCM 16871 / CCUG 27074 / LMG 4051 / NBRC 15346 / NCIMB 9279 / VKM B-1422 / R1)).